Consider the following 274-residue polypeptide: tRNA (guanine-N(1)-)-methyltransferase (274 aa).

Residues glycine 116 and 140 to 145 (LGDYVL) contribute to the S-adenosyl-L-methionine site.

This sequence belongs to the RNA methyltransferase TrmD family. As to quaternary structure, homodimer.

It is found in the cytoplasm. It carries out the reaction guanosine(37) in tRNA + S-adenosyl-L-methionine = N(1)-methylguanosine(37) in tRNA + S-adenosyl-L-homocysteine + H(+). Its function is as follows. Specifically methylates guanosine-37 in various tRNAs. The sequence is that of tRNA (guanine-N(1)-)-methyltransferase from Arthrobacter sp. (strain FB24).